Reading from the N-terminus, the 440-residue chain is Serine hydroxymethyltransferase (440 aa).

Residues Leu119 and Gly123–Leu125 contribute to the (6S)-5,6,7,8-tetrahydrofolate site. Lys228 carries the N6-(pyridoxal phosphate)lysine modification. Ser370 to Phe372 lines the (6S)-5,6,7,8-tetrahydrofolate pocket.

The protein belongs to the SHMT family. In terms of assembly, homodimer. Pyridoxal 5'-phosphate is required as a cofactor.

Its subcellular location is the cytoplasm. It catalyses the reaction (6R)-5,10-methylene-5,6,7,8-tetrahydrofolate + glycine + H2O = (6S)-5,6,7,8-tetrahydrofolate + L-serine. It functions in the pathway one-carbon metabolism; tetrahydrofolate interconversion. The protein operates within amino-acid biosynthesis; glycine biosynthesis; glycine from L-serine: step 1/1. In terms of biological role, catalyzes the reversible interconversion of serine and glycine with tetrahydrofolate (THF) serving as the one-carbon carrier. This reaction serves as the major source of one-carbon groups required for the biosynthesis of purines, thymidylate, methionine, and other important biomolecules. Also exhibits THF-independent aldolase activity toward beta-hydroxyamino acids, producing glycine and aldehydes, via a retro-aldol mechanism. In Chlorobium luteolum (strain DSM 273 / BCRC 81028 / 2530) (Pelodictyon luteolum), this protein is Serine hydroxymethyltransferase.